The sequence spans 356 residues: sn-glycerol-3-phosphate import ATP-binding protein UgpC (356 aa).

The ABC transporter domain maps to 4–235 (LKLQAVTKSW…PASRFVASFI (232 aa)). An ATP-binding site is contributed by 37–44 (GPSGCGKS).

Belongs to the ABC transporter superfamily. sn-glycerol-3-phosphate importer (TC 3.A.1.1.3) family. As to quaternary structure, the complex is composed of two ATP-binding proteins (UgpC), two transmembrane proteins (UgpA and UgpE) and a solute-binding protein (UgpB).

Its subcellular location is the cell inner membrane. It catalyses the reaction sn-glycerol 3-phosphate(out) + ATP + H2O = sn-glycerol 3-phosphate(in) + ADP + phosphate + H(+). Part of the ABC transporter complex UgpBAEC involved in sn-glycerol-3-phosphate (G3P) import. Responsible for energy coupling to the transport system. The polypeptide is sn-glycerol-3-phosphate import ATP-binding protein UgpC (Salmonella paratyphi A (strain ATCC 9150 / SARB42)).